Consider the following 360-residue polypeptide: Popeye domain-containing protein 1 (360 aa).

Over 1–48 (MNYTESSPLRESTAIGFTPELESIIPVPSNKTTCENWREIHHLVFHVA) the chain is Extracellular. N-linked (GlcNAc...) asparagine glycosylation is found at Asn2 and Asn30. A helical transmembrane segment spans residues 49-69 (NICFAVGLVIPTTLHLHMIFL). Position 70 (Arg70) is a topological domain, cytoplasmic. A helical membrane pass occupies residues 71–91 (GMLTLGCTLYIVWATLYRCAL). Asp92 is a topological domain (extracellular). A helical membrane pass occupies residues 93–113 (IMIWNSVFLGVNILHLSYLLY). Positions 93–115 (IMIWNSVFLGVNILHLSYLLYKK) are required for interaction with CAV3. The Cytoplasmic portion of the chain corresponds to 114–360 (KKRPVKIEKE…PNTLKVHQLP (247 aa)). The interval 136–186 (RVPPDLFRRLTGQFCMIQTLKKGQTYAAEDKTSVDDRLSILLKGKMKVSYR) is required for interaction with KCNK2. A phosphoserine mark is found at Ser295 and Ser318. Positions 317–360 (SSLHVSSPHQRASAKMKPIEEGAEDDDDVFEPASPNTLKVHQLP) are disordered. Residues 337-346 (EGAEDDDDVF) show a composition bias toward acidic residues. The segment covering 350 to 360 (SPNTLKVHQLP) has biased composition (polar residues).

This sequence belongs to the popeye family. Homodimer. Homodimerization requires the C-terminus cytoplasmic region. Interacts (via the C-terminus cytoplasmic tail) with TJP1. Interacts (via the C-terminus cytoplasmic tail) with ARHGEF25/GEFT (via the DH domain). Interacts (via the C-terminus cytoplasmic tail) with VAMP3. Interacts with KCNK2; the interaction enhances KCNK2 surface expression and is inhibited by cAMP. Interacts with CAV3. In terms of tissue distribution, expressed in epithelial cells (at protein level). Expressed in fetal and adult heart and skeletal muscle.

It is found in the lateral cell membrane. The protein resides in the cell junction. It localises to the tight junction. Its subcellular location is the membrane. The protein localises to the cell membrane. It is found in the sarcolemma. The protein resides in the caveola. In terms of biological role, cell adhesion molecule involved in the establishment and/or maintenance of cell integrity. Involved in the formation and regulation of the tight junction (TJ) paracellular permeability barrier in epithelial cells. Plays a role in VAMP3-mediated vesicular transport and recycling of different receptor molecules through its interaction with VAMP3. Plays a role in the regulation of cell shape and movement by modulating the Rho-family GTPase activity through its interaction with ARHGEF25/GEFT. Induces primordial adhesive contact and aggregation of epithelial cells in a Ca(2+)-independent manner. Also involved in striated muscle regeneration and repair and in the regulation of cell spreading. Important for the maintenance of cardiac function. Plays a regulatory function in heart rate dynamics mediated, at least in part, through cAMP-binding and, probably, by increasing cell surface expression of the potassium channel KCNK2 and enhancing current density. Is also a caveolae-associated protein important for the preservation of caveolae structural and functional integrity as well as for heart protection against ischemia injury. This chain is Popeye domain-containing protein 1, found in Homo sapiens (Human).